Consider the following 442-residue polypeptide: Adenylosuccinate synthetase (442 aa).

Residues 16–22 (GDEGKGK) and 44–46 (GHT) contribute to the GTP site. Aspartate 17 acts as the Proton acceptor in catalysis. Mg(2+)-binding residues include aspartate 17 and glycine 44. IMP is bound by residues 17–20 (DEGK), 42–45 (NAGH), threonine 133, arginine 147, glutamine 228, threonine 243, and arginine 307. The Proton donor role is filled by histidine 45. 303–309 (AVTGRPR) serves as a coordination point for substrate. Residues arginine 309, 335–337 (KLD), and 417–419 (STG) each bind GTP.

This sequence belongs to the adenylosuccinate synthetase family. As to quaternary structure, homodimer. Mg(2+) is required as a cofactor.

The protein resides in the cytoplasm. The enzyme catalyses IMP + L-aspartate + GTP = N(6)-(1,2-dicarboxyethyl)-AMP + GDP + phosphate + 2 H(+). The protein operates within purine metabolism; AMP biosynthesis via de novo pathway; AMP from IMP: step 1/2. Its function is as follows. Plays an important role in the de novo pathway of purine nucleotide biosynthesis. Catalyzes the first committed step in the biosynthesis of AMP from IMP. The polypeptide is Adenylosuccinate synthetase (Koribacter versatilis (strain Ellin345)).